Reading from the N-terminus, the 544-residue chain is MYEFKFADIGEGIHEGTVLQWNFKVGDKVKEGETLVIVETDKVNAELPSPVDGTIVSLGAKEGEEIHVGQIIVTIDDGTGTPAAAPAPAQVSAPTPAPAAAPQVAAPAASGDIYDFKFADIGEGIHEGTILQWNFKVGDKVKEGETLVVVETDKVNAELPSPVDGTILKLGKAEGEVIHVGETVVLIGQNGATLEQAQAPKAEAPVSEPKKGAGVVGEIEVSDDIIGGSEEVHVVATTGKVLASPVARKLASDLGVDIATIKGSGEQGRVMKDDVQNSKAPAEAQAPVQQTQAPAQAAASVAPSFAAAGKPQGDVEVVKITRLRKAVSNAMTRSKSIIPETVLMDEINVDALVNFRNEAKGLAESKGIKLTYMAFIAKAVLIALKEFPMFNASFNHDTDEVYIKKFINLGMAVDTPDGLIVPNIKNADRLSVFELASQVRSLADDTIARKISMDQQTGGTFTITNFGSAGIAFGTPVINYPELAILGIGKIDRKPWVVGNEIKIAHTLPLSLAVDHRIIDGADGGRFLMRVKELLTNPTLLLLS.

2 consecutive Lipoyl-binding domains span residues 1–76 and 113–188; these read MYEF…VTID and IYDF…VLIG. N6-lipoyllysine is present on residues K42 and K154. The 38-residue stretch at 242–279 folds into the Peripheral subunit-binding (PSBD) domain; that stretch reads LASPVARKLASDLGVDIATIKGSGEQGRVMKDDVQNSK. H516 is a catalytic residue.

Belongs to the 2-oxoacid dehydrogenase family. As to quaternary structure, forms a 24-polypeptide structural core with octahedral symmetry. It depends on (R)-lipoate as a cofactor.

It catalyses the reaction N(6)-[(R)-dihydrolipoyl]-L-lysyl-[protein] + acetyl-CoA = N(6)-[(R)-S(8)-acetyldihydrolipoyl]-L-lysyl-[protein] + CoA. Functionally, the pyruvate dehydrogenase complex catalyzes the overall conversion of pyruvate to acetyl-CoA and CO(2). It contains multiple copies of three enzymatic components: pyruvate dehydrogenase (E1), dihydrolipoamide acetyltransferase (E2) and lipoamide dehydrogenase (E3). This chain is Dihydrolipoyllysine-residue acetyltransferase component of pyruvate dehydrogenase complex (pdhC), found in Acholeplasma laidlawii.